The sequence spans 191 residues: Thymidine kinase (191 aa).

ATP contacts are provided by residues 15–22 (GSMFSGKS) and 88–91 (DEVQ). Catalysis depends on Glu-89, which acts as the Proton acceptor. 4 residues coordinate Zn(2+): Cys-145, Cys-148, Cys-183, and His-186.

This sequence belongs to the thymidine kinase family. In terms of assembly, homotetramer.

It is found in the cytoplasm. It carries out the reaction thymidine + ATP = dTMP + ADP + H(+). This is Thymidine kinase from Macrococcus caseolyticus (strain JCSC5402) (Macrococcoides caseolyticum).